The following is a 473-amino-acid chain: Glutamyl-tRNA reductase (473 aa).

Substrate is bound by residues 49-52, S109, 114-116, and Q120; these read TCNR and EHQ. The active-site Nucleophile is C50. 189–194 is a binding site for NADP(+); sequence GAGAMA. Residues 422–473 form a disordered region; that stretch reads VAISAPQPSTDSPARAAYQPTDEAATDAEPRRDDAEPPSAAAAQDAGRESRP.

It belongs to the glutamyl-tRNA reductase family. In terms of assembly, homodimer.

The enzyme catalyses (S)-4-amino-5-oxopentanoate + tRNA(Glu) + NADP(+) = L-glutamyl-tRNA(Glu) + NADPH + H(+). It participates in porphyrin-containing compound metabolism; protoporphyrin-IX biosynthesis; 5-aminolevulinate from L-glutamyl-tRNA(Glu): step 1/2. Catalyzes the NADPH-dependent reduction of glutamyl-tRNA(Glu) to glutamate 1-semialdehyde (GSA). This chain is Glutamyl-tRNA reductase, found in Acidothermus cellulolyticus (strain ATCC 43068 / DSM 8971 / 11B).